Here is a 418-residue protein sequence, read N- to C-terminus: ORC1-type DNA replication protein 2 (418 aa).

Residues 72 to 76 (TGKTV), Y218, and R230 each bind ATP.

It belongs to the CDC6/cdc18 family.

Involved in regulation of DNA replication. In Sulfurisphaera tokodaii (strain DSM 16993 / JCM 10545 / NBRC 100140 / 7) (Sulfolobus tokodaii), this protein is ORC1-type DNA replication protein 2 (cdc6-2).